The chain runs to 198 residues: Recombination protein RecR (198 aa).

The C4-type zinc-finger motif lies at 57-72; sequence CAMCNTFTEHEVCETC. The Toprim domain maps to 80–175; sequence ALLCVVETPG…KVSRLARGVP (96 aa).

The protein belongs to the RecR family.

In terms of biological role, may play a role in DNA repair. It seems to be involved in an RecBC-independent recombinational process of DNA repair. It may act with RecF and RecO. In Janthinobacterium sp. (strain Marseille) (Minibacterium massiliensis), this protein is Recombination protein RecR.